The following is a 554-amino-acid chain: Glucose-6-phosphate isomerase (554 aa).

Residue Glu359 is the Proton donor of the active site. Active-site residues include His390 and Lys518.

This sequence belongs to the GPI family.

It is found in the cytoplasm. It catalyses the reaction alpha-D-glucose 6-phosphate = beta-D-fructose 6-phosphate. It functions in the pathway carbohydrate biosynthesis; gluconeogenesis. The protein operates within carbohydrate degradation; glycolysis; D-glyceraldehyde 3-phosphate and glycerone phosphate from D-glucose: step 2/4. Functionally, catalyzes the reversible isomerization of glucose-6-phosphate to fructose-6-phosphate. The chain is Glucose-6-phosphate isomerase from Pseudomonas fluorescens.